The sequence spans 116 residues: Regulator of ribonuclease activity B (116 aa).

The protein belongs to the RraB family. As to quaternary structure, interacts with the C-terminal region of Rne.

It is found in the cytoplasm. Functionally, globally modulates RNA abundance by binding to RNase E (Rne) and regulating its endonucleolytic activity. Can modulate Rne action in a substrate-dependent manner by altering the composition of the degradosome. The chain is Regulator of ribonuclease activity B from Colwellia psychrerythraea (strain 34H / ATCC BAA-681) (Vibrio psychroerythus).